We begin with the raw amino-acid sequence, 332 residues long: 5,10-methylenetetrahydromethanopterin reductase (332 aa).

It belongs to the mer family.

Its subcellular location is the cytoplasm. It catalyses the reaction 5-methyl-5,6,7,8-tetrahydromethanopterin + oxidized coenzyme F420-(gamma-L-Glu)(n) + H(+) = 5,10-methylenetetrahydromethanopterin + reduced coenzyme F420-(gamma-L-Glu)(n). Its pathway is metabolic intermediate metabolism; lactate oxidation. Functionally, catalyzes the oxidation of methyl-H(4)MPT to methylene-H(4)MPT. In Archaeoglobus fulgidus (strain ATCC 49558 / DSM 4304 / JCM 9628 / NBRC 100126 / VC-16), this protein is 5,10-methylenetetrahydromethanopterin reductase.